A 256-amino-acid polypeptide reads, in one-letter code: Thiazole synthase (256 aa).

The Schiff-base intermediate with DXP role is filled by Lys95. 1-deoxy-D-xylulose 5-phosphate-binding positions include Gly156, 182-183 (AG), and 204-205 (NT).

The protein belongs to the ThiG family. As to quaternary structure, homotetramer. Forms heterodimers with either ThiH or ThiS.

It localises to the cytoplasm. The catalysed reaction is [ThiS sulfur-carrier protein]-C-terminal-Gly-aminoethanethioate + 2-iminoacetate + 1-deoxy-D-xylulose 5-phosphate = [ThiS sulfur-carrier protein]-C-terminal Gly-Gly + 2-[(2R,5Z)-2-carboxy-4-methylthiazol-5(2H)-ylidene]ethyl phosphate + 2 H2O + H(+). It participates in cofactor biosynthesis; thiamine diphosphate biosynthesis. Catalyzes the rearrangement of 1-deoxy-D-xylulose 5-phosphate (DXP) to produce the thiazole phosphate moiety of thiamine. Sulfur is provided by the thiocarboxylate moiety of the carrier protein ThiS. In vitro, sulfur can be provided by H(2)S. In Cronobacter sakazakii (strain ATCC BAA-894) (Enterobacter sakazakii), this protein is Thiazole synthase.